Here is a 403-residue protein sequence, read N- to C-terminus: Acetate kinase (403 aa).

Asparagine 8 provides a ligand contact to Mg(2+). Residue lysine 15 coordinates ATP. Position 90 (arginine 90) interacts with substrate. Aspartate 147 serves as the catalytic Proton donor/acceptor. ATP is bound by residues 207-211, 282-284, and 330-334; these read HLGSG, DLR, and GVGEN. A Mg(2+)-binding site is contributed by glutamate 384.

Belongs to the acetokinase family. In terms of assembly, homodimer. Mg(2+) is required as a cofactor. Mn(2+) serves as cofactor.

It localises to the cytoplasm. The catalysed reaction is acetate + ATP = acetyl phosphate + ADP. The protein operates within metabolic intermediate biosynthesis; acetyl-CoA biosynthesis; acetyl-CoA from acetate: step 1/2. Functionally, catalyzes the formation of acetyl phosphate from acetate and ATP. Can also catalyze the reverse reaction. This Exiguobacterium sp. (strain ATCC BAA-1283 / AT1b) protein is Acetate kinase.